Reading from the N-terminus, the 783-residue chain is Heat shock transcription factor (783 aa).

A disordered region spans residues 1–59 (MTTNLYAIAGPSKPTTPTSTPSPRSEPPSPLKSLTSLPTNPLNSHGTSTPNTLTNQLSS). 2 stretches are compositionally biased toward low complexity: residues 11 to 23 (PSKPTTPTSTPSP) and 31 to 42 (LKSLTSLPTNPL). The span at 43–59 (NSHGTSTPNTLTNQLSS) shows a compositional bias: polar residues. The DNA-binding element occupies 78 to 168 (MKVPAFLNKL…PIELWEFANP (91 aa)). The tract at residues 181 to 262 (VTRKNNRPSN…PGSVPPSHTS (82 aa)) is disordered. 2 stretches are compositionally biased toward low complexity: residues 189–199 (SNSGVGPSSSV) and 209–233 (STRSASAAAASGSASGQIQQAISQG). Over residues 238–262 (NHSTSGKYLITDGTTPGSVPPSHTS) the composition is skewed to polar residues. The segment at 280 to 333 (GIAAIRQTQASIATDLRKLQASNEALWRQAYETQEKQRKHEETIDLIVSFLERL) is involved in trimerization. 2 stretches are compositionally biased toward basic and acidic residues: residues 350–372 (RGVGVRRDRDGREGRDSRDSRFA) and 399–415 (TGEHGEIESPTSDDRLV). Disordered stretches follow at residues 350 to 554 (RGVG…LLSP), 599 to 652 (QALA…TLAL), and 736 to 783 (QGLA…KSES). Residues 418–448 (GSNSEYSIPSVKRTSSSSHPISLGQLGSSRF) are compositionally biased toward polar residues. 4 stretches are compositionally biased toward low complexity: residues 452-467 (PSEDPSPSASGPGSTS), 497-511 (LSPLSDTDPLLPSSS), 522-550 (PFPSSNSNQSNSFNPSNPSSAWASNPSQP), and 616-632 (NPNGNASTSASASAHGM). Acidic residues predominate over residues 742–752 (GEEEGEREVEG). Over residues 753–765 (DGGVSSSGAGAGA) the composition is skewed to gly residues.

It belongs to the HSF family. As to quaternary structure, homotrimer. Homotrimerization increases the affinity of HSF1 to DNA. Interacts with transcriptional coregulator SSA1 on chromatin.

It localises to the nucleus. In terms of biological role, DNA-binding transcription factor that specifically binds heat shock promoter elements (HSE) and activates transcription. Together with its coregulator SSA1, activates expression of laccase LAC1 during glucose starvation. In Cryptococcus neoformans var. neoformans serotype D (strain JEC21 / ATCC MYA-565) (Filobasidiella neoformans), this protein is Heat shock transcription factor.